We begin with the raw amino-acid sequence, 836 residues long: Protein PDC2 (836 aa).

The HTH CENPB-type domain occupies 64 to 139 (ELIRRRKRAN…VKKLNINITG (76 aa)). Over residues 626–640 (TTSTSVVSDSPSGTT) the composition is skewed to low complexity. Positions 626 to 732 (TTSTSVVSDS…NVQFGNGAGS (107 aa)) are disordered. A compositionally biased stretch (polar residues) spans 641 to 651 (QKYNNISTYPN). Residues 677–698 (GQELQNPQGQQQQEQQQQQQHQ) are compositionally biased toward low complexity. The span at 699–711 (MSGYNFSPISNIE) shows a compositional bias: polar residues.

Its function is as follows. Essential for the synthesis of pyruvate decarboxylase. The sequence is that of Protein PDC2 (PDC2) from Candida albicans (Yeast).